We begin with the raw amino-acid sequence, 625 residues long: Probable potassium transport system protein Kup 2 (625 aa).

12 helical membrane passes run 15 to 35 (LSFAALGVVFGDIGTSPLYAF), 52 to 72 (ILSLIFWSLIIIVSIKYLVIV), 98 to 118 (GGWLLFITLVGIGLIIGDGML), 134 to 154 (LSPNLAKYVLPVTLIILFFLF), 164 to 184 (IGVYFAPVMLVWFITIGILGF), 212 to 232 (FALFILGGVFLVMTGGEALFA), 246 to 266 (WFAVALPALLLCYFGQGAFVL), 284 to 304 (FLPVMIILATLATIIASQAII), 336 to 356 (VYLPLINFILALGTCSLVVIF), 365 to 385 (AYGIAVNLDMLITTVLVGIIA), 394 to 414 (FKILIFLLILIIELAFFAGNI), and 417 to 437 (LLTGGWIPILIAFLGFVVMYT).

Belongs to the HAK/KUP transporter (TC 2.A.72) family.

Its subcellular location is the cell inner membrane. The enzyme catalyses K(+)(in) + H(+)(in) = K(+)(out) + H(+)(out). Functionally, transport of potassium into the cell. Likely operates as a K(+):H(+) symporter. In Legionella pneumophila (strain Paris), this protein is Probable potassium transport system protein Kup 2.